The following is a 356-amino-acid chain: DNA polymerase IV (356 aa).

A UmuC domain is found at 6–187; that stretch reads IIHIDMDYFF…LDIGDFPGVG (182 aa). Residues aspartate 10 and aspartate 105 each coordinate Mg(2+). Glutamate 106 is an active-site residue.

This sequence belongs to the DNA polymerase type-Y family. Monomer. Mg(2+) is required as a cofactor.

It is found in the cytoplasm. The enzyme catalyses DNA(n) + a 2'-deoxyribonucleoside 5'-triphosphate = DNA(n+1) + diphosphate. Poorly processive, error-prone DNA polymerase involved in untargeted mutagenesis. Copies undamaged DNA at stalled replication forks, which arise in vivo from mismatched or misaligned primer ends. These misaligned primers can be extended by PolIV. Exhibits no 3'-5' exonuclease (proofreading) activity. May be involved in translesional synthesis, in conjunction with the beta clamp from PolIII. The sequence is that of DNA polymerase IV from Staphylococcus aureus (strain COL).